Consider the following 361-residue polypeptide: Histidine biosynthesis bifunctional protein HisB (361 aa).

The interval 1 to 172 (MTQPTLFIDR…PKTTACKRPP (172 aa)) is histidinol-phosphatase. Asp9 (nucleophile) is an active-site residue. 2 residues coordinate Mg(2+): Asp9 and Asp11. The active-site Proton donor is the Asp11. Zn(2+)-binding residues include Cys92, His94, Cys100, and Cys102. Position 129 (Asp129) interacts with Mg(2+). An imidazoleglycerol-phosphate dehydratase region spans residues 173 to 361 (RYAEVVRTTK…NELPSSKGVL (189 aa)).

This sequence in the N-terminal section; belongs to the histidinol-phosphatase family. It in the C-terminal section; belongs to the imidazoleglycerol-phosphate dehydratase family. Mg(2+) serves as cofactor. It depends on Zn(2+) as a cofactor.

The protein localises to the cytoplasm. It carries out the reaction D-erythro-1-(imidazol-4-yl)glycerol 3-phosphate = 3-(imidazol-4-yl)-2-oxopropyl phosphate + H2O. The enzyme catalyses L-histidinol phosphate + H2O = L-histidinol + phosphate. Its pathway is amino-acid biosynthesis; L-histidine biosynthesis; L-histidine from 5-phospho-alpha-D-ribose 1-diphosphate: step 6/9. It participates in amino-acid biosynthesis; L-histidine biosynthesis; L-histidine from 5-phospho-alpha-D-ribose 1-diphosphate: step 8/9. The polypeptide is Histidine biosynthesis bifunctional protein HisB (Actinobacillus pleuropneumoniae serotype 3 (strain JL03)).